A 259-amino-acid polypeptide reads, in one-letter code: Methyltransferase afvD (259 aa).

It belongs to the class I-like SAM-binding methyltransferase superfamily.

The protein operates within secondary metabolite biosynthesis. Methyltransferase; part of the gene cluster that mediates the biosynthesis of aflavarin, a bicoumarin that exhibits anti-insectan activity against the fungivorous beetle C.hemipterus. The sequence is that of Methyltransferase afvD from Aspergillus flavus (strain ATCC 200026 / FGSC A1120 / IAM 13836 / NRRL 3357 / JCM 12722 / SRRC 167).